The chain runs to 484 residues: MIQVLLVTICLAVFPYQGSSIILESGNIDDYEVVYPRKVTALPKGAVQQKYEDTMQYEFKVNEEPVVLHLEKNKGLFSKDYSETHYSPDGREITTYPPVEDHCYYHGRIQNDADSTASISACNGLKGHFKLQGETYFIEPLKLPDSEAHAVFKYENVEKEDEAPKMCGVTETNWESDEPIKKLSQIMIPPEQQRYIELVIVADHRMYTKYDGDKTEISSKIYETANNLNEIYRHLKIHVVLIGLEMWSSGELSKVTLSADETLDSFGEWRERDLLQRKRHDNAQLLTGMIFNEKIEGRAYKESMCDPKRSVGIVRDHRTRPHLVANRMAHELGHNLGFHHDGDSCTCGANSCIMSATVSNEPSSRFSDCSLFQYSSDIIHNPFTSRCLYNEPSKTDIVSPSVCGNYYMEVGEDCDCGPPANCQNPCCDAATCRLTPGSQCADGLCCDQCRFMKKGTICRIARGDDLDDYCNGISAGCPRNPFHA.

The first 20 residues, 1-20, serve as a signal peptide directing secretion; it reads MIQVLLVTICLAVFPYQGSS. The propeptide occupies 21-191; it reads IILESGNIDD…KLSQIMIPPE (171 aa). Q192 bears the Pyrrolidone carboxylic acid mark. Positions 194-392 constitute a Peptidase M12B domain; that stretch reads RYIELVIVAD…FTSRCLYNEP (199 aa). E197 and D281 together coordinate Ca(2+). 3 disulfide bridges follow: C305/C387, C345/C369, and C347/C352. Position 330 (H330) interacts with Zn(2+). E331 is an active-site residue. 2 residues coordinate Zn(2+): H334 and H340. Residues C387, N390, V402, N405, E409, E412, and D415 each contribute to the Ca(2+) site. The 85-residue stretch at 400–484 folds into the Disintegrin domain; sequence PSVCGNYYME…AGCPRNPFHA (85 aa). 7 disulfides stabilise this stretch: C403/C422, C414/C432, C416/C427, C426/C449, C440/C446, C445/C470, and C458/C477. A Cell attachment site motif is present at residues 462–464; the sequence is RGD.

This sequence belongs to the venom metalloproteinase (M12B) family. P-II subfamily. P-IIb sub-subfamily. In terms of assembly, monomer. Requires Zn(2+) as cofactor. The N-terminus is blocked. In terms of tissue distribution, expressed by the venom gland.

It is found in the secreted. Fibrinogenolytic activity is completely inhibited by EDTA, but not by PMSF. Functionally, snake venom zinc metalloproteinase that inhibits ADP-induced human platelet aggregation (IC(50)=120 nM (native) and IC(50)=248 nM (recombinant)). May act by binding to the receptor GPIIb/GPIIIa (ITGA2B/ITGB3) on the platelet surface. Degrades the alpha-chain of fibrinogen completely and the beta-chain partially, leaving the gamma chain intact. Also inhibits the growth of several cell lines, including human liver cancer cells (Bel7402), human leukemia cells (K562) and human gastric carcinoma cells (BGC823). The chain is Zinc metalloproteinase-disintegrin jerdonitin from Protobothrops jerdonii (Jerdon's pitviper).